The primary structure comprises 65 residues: Large ribosomal subunit protein uL29 (65 aa).

Belongs to the universal ribosomal protein uL29 family.

The chain is Large ribosomal subunit protein uL29 from Dehalococcoides mccartyi (strain ATCC BAA-2100 / JCM 16839 / KCTC 5957 / BAV1).